Reading from the N-terminus, the 276-residue chain is Radial spoke head protein 9 homolog (276 aa).

This sequence belongs to the flagellar radial spoke RSP9 family. As to quaternary structure, component of the axonemal radial spoke 1 (RS1) and 2 (RS2) complexes, at least composed of spoke head proteins RSPH1, RSPH3, RSPH9 and the cilia-specific component RSPH4A or sperm-specific component RSPH6A, spoke stalk proteins RSPH14, DNAJB13, DYDC1, ROPN1L and NME5, and the RS1 complex-specific anchor protein IQUB. Interacts with IQUB. Interacts with RSPH3B. Interacts with RSPH4A. Interacts with RSPH6A. Interacts with CFAP61. Interacts with LRRC23. Expressed in the testis, trachea, lung, oviduct and ependymal cells (at protein level).

The protein localises to the cytoplasm. It is found in the cytoskeleton. It localises to the cilium axoneme. Its subcellular location is the flagellum axoneme. The protein resides in the cell projection. The protein localises to the kinocilium. Its function is as follows. Functions as part of axonemal radial spoke complexes that play an important part in the motility of sperm and cilia. Essential for both the radial spoke head assembly and the central pair microtubule stability in ependymal motile cilia. Required for motility of olfactory and neural cilia and for the structural integrity of ciliary axonemes in both 9+0 and 9+2 motile cilia. This is Radial spoke head protein 9 homolog (Rsph9) from Mus musculus (Mouse).